The primary structure comprises 157 residues: Endoribonuclease YbeY (157 aa).

The Zn(2+) site is built by H114, H118, and H124.

It belongs to the endoribonuclease YbeY family. The cofactor is Zn(2+).

The protein localises to the cytoplasm. Functionally, single strand-specific metallo-endoribonuclease involved in late-stage 70S ribosome quality control and in maturation of the 3' terminus of the 16S rRNA. In Salmonella paratyphi A (strain AKU_12601), this protein is Endoribonuclease YbeY.